Reading from the N-terminus, the 519-residue chain is Cytochrome P450 52A10 (519 aa).

Cys-466 is a heme binding site.

The protein belongs to the cytochrome P450 family. Heme is required as a cofactor.

It is found in the membrane. Together with an NADPH cytochrome P450 the enzyme system catalyzes the terminal hydroxylation as the first step in the assimilation of alkanes and fatty acids. In Candida maltosa (Yeast), this protein is Cytochrome P450 52A10 (CYP52A10).